Reading from the N-terminus, the 35-residue chain is Bacteriocin lactococcin-G subunit beta (35 aa).

As to quaternary structure, bacteriocin activity requires interaction of alpha and beta peptides in a molar ratio of 7:1 or 8:1 respectively.

Functionally, kills Lactococci. The sequence is that of Bacteriocin lactococcin-G subunit beta from Lactococcus lactis subsp. lactis (Streptococcus lactis).